We begin with the raw amino-acid sequence, 116 residues long: T cell receptor alpha variable 38-2/delta variable 8 (116 aa).

An N-terminal signal peptide occupies residues 1-21 (MACPGFLWALVISTCLEFSMA). Residues 22-116 (QTVTQSQPEM…AAMYFCAYRS (95 aa)) form the Ig-like domain. A disulfide bridge connects residues Cys43 and Cys112. Asn78 is a glycosylation site (N-linked (GlcNAc...) asparagine).

In terms of assembly, alpha-beta TR is a heterodimer composed of an alpha and beta chain; disulfide-linked. The alpha-beta TR is associated with the transmembrane signaling CD3 coreceptor proteins to form the TR-CD3 (TcR or TCR). The assembly of alpha-beta TR heterodimers with CD3 occurs in the endoplasmic reticulum where a single alpha-beta TR heterodimer associates with one CD3D-CD3E heterodimer, one CD3G-CD3E heterodimer and one CD247 homodimer forming a stable octameric structure. CD3D-CD3E and CD3G-CD3E heterodimers preferentially associate with TR alpha and TR beta chains, respectively. The association of the CD247 homodimer is the last step of TcR assembly in the endoplasmic reticulum and is required for transport to the cell surface.

The protein resides in the cell membrane. Its function is as follows. V region of the variable domain of T cell receptor (TR) alpha chain that participates in the antigen recognition. Alpha-beta T cell receptors are antigen specific receptors which are essential to the immune response and are present on the cell surface of T lymphocytes. Recognize peptide-major histocompatibility (MH) (pMH) complexes that are displayed by antigen presenting cells (APC), a prerequisite for efficient T cell adaptive immunity against pathogens. Binding of alpha-beta TR to pMH complex initiates TR-CD3 clustering on the cell surface and intracellular activation of LCK that phosphorylates the ITAM motifs of CD3G, CD3D, CD3E and CD247 enabling the recruitment of ZAP70. In turn ZAP70 phosphorylates LAT, which recruits numerous signaling molecules to form the LAT signalosome. The LAT signalosome propagates signal branching to three major signaling pathways, the calcium, the mitogen-activated protein kinase (MAPK) kinase and the nuclear factor NF-kappa-B (NF-kB) pathways, leading to the mobilization of transcription factors that are critical for gene expression and essential for T cell growth and differentiation. The T cell repertoire is generated in the thymus, by V-(D)-J rearrangement. This repertoire is then shaped by intrathymic selection events to generate a peripheral T cell pool of self-MH restricted, non-autoaggressive T cells. Post-thymic interaction of alpha-beta TR with the pMH complexes shapes TR structural and functional avidity. This Homo sapiens (Human) protein is T cell receptor alpha variable 38-2/delta variable 8.